The following is a 274-amino-acid chain: Probable glycerophosphodiester phosphodiesterase 1 (274 aa).

The region spanning 12-264 (PFVVAHRGAS…HHPGRTKAWL (253 aa)) is the GP-PDE domain. His17 acts as the Proton acceptor in catalysis. Ca(2+)-binding residues include Glu44 and Asp46. The Proton donor role is filled by His59. Glu126 serves as a coordination point for Ca(2+).

The protein belongs to the glycerophosphoryl diester phosphodiesterase family. Ca(2+) serves as cofactor.

The enzyme catalyses a sn-glycero-3-phosphodiester + H2O = an alcohol + sn-glycerol 3-phosphate + H(+). In terms of biological role, glycerophosphodiester phosphodiesterase hydrolyzes glycerophosphodiesters into glycerol-3-phosphate (G3P) and the corresponding alcohol. The protein is Probable glycerophosphodiester phosphodiesterase 1 (glpQ1) of Mycobacterium tuberculosis (strain CDC 1551 / Oshkosh).